The following is a 79-amino-acid chain: Sulfur carrier protein TusA (79 aa).

Catalysis depends on C17, which acts as the Cysteine persulfide intermediate.

The protein belongs to the sulfur carrier protein TusA family.

The protein resides in the cytoplasm. Its function is as follows. Sulfur carrier protein which probably makes part of a sulfur-relay system. This Pseudoalteromonas translucida (strain TAC 125) protein is Sulfur carrier protein TusA.